The chain runs to 261 residues: Hydroxyethylthiazole kinase (261 aa).

M40 provides a ligand contact to substrate. K116 and T162 together coordinate ATP. A substrate-binding site is contributed by G189.

It belongs to the Thz kinase family. The cofactor is Mg(2+).

The catalysed reaction is 5-(2-hydroxyethyl)-4-methylthiazole + ATP = 4-methyl-5-(2-phosphooxyethyl)-thiazole + ADP + H(+). It functions in the pathway cofactor biosynthesis; thiamine diphosphate biosynthesis; 4-methyl-5-(2-phosphoethyl)-thiazole from 5-(2-hydroxyethyl)-4-methylthiazole: step 1/1. In terms of biological role, catalyzes the phosphorylation of the hydroxyl group of 4-methyl-5-beta-hydroxyethylthiazole (THZ). The sequence is that of Hydroxyethylthiazole kinase from Methanosarcina acetivorans (strain ATCC 35395 / DSM 2834 / JCM 12185 / C2A).